Consider the following 749-residue polypeptide: Replication restart protein PriA (749 aa).

In terms of domain architecture, Helicase ATP-binding spans 224–391 (SLKTSQFHTH…LSGKYVLSRL (168 aa)). 237 to 244 (GITGSGKT) lines the ATP pocket. The DEAH box signature appears at 333-336 (DEEH). Residues C454, C457, C463, C466, C481, C484, C495, and C498 each contribute to the Zn(2+) site. In terms of domain architecture, Helicase C-terminal spans 490-658 (DLPQSCPKCL…EYPPFIRLIR (169 aa)).

The protein belongs to the helicase family. PriA subfamily. In terms of assembly, component of the replication restart primosome. It depends on Zn(2+) as a cofactor.

It carries out the reaction Couples ATP hydrolysis with the unwinding of duplex DNA by translocating in the 3'-5' direction.. The enzyme catalyses ATP + H2O = ADP + phosphate + H(+). Initiates the restart of stalled replication forks, which reloads the replicative helicase on sites other than the origin of replication. Recognizes and binds to abandoned replication forks and remodels them to uncover a helicase loading site. Promotes assembly of the primosome at these replication forks. The protein is Replication restart protein PriA of Chlamydia pneumoniae (Chlamydophila pneumoniae).